The primary structure comprises 424 residues: Kynureninase (424 aa).

Pyridoxal 5'-phosphate is bound by residues Leu106, Thr107, 134-137 (FPSD), Asp219, His222, and Tyr244. Lys245 is modified (N6-(pyridoxal phosphate)lysine). Residues Trp274 and Asn302 each coordinate pyridoxal 5'-phosphate.

Belongs to the kynureninase family. As to quaternary structure, homodimer. It depends on pyridoxal 5'-phosphate as a cofactor.

It carries out the reaction L-kynurenine + H2O = anthranilate + L-alanine + H(+). The enzyme catalyses 3-hydroxy-L-kynurenine + H2O = 3-hydroxyanthranilate + L-alanine + H(+). Its pathway is amino-acid degradation; L-kynurenine degradation; L-alanine and anthranilate from L-kynurenine: step 1/1. The protein operates within cofactor biosynthesis; NAD(+) biosynthesis; quinolinate from L-kynurenine: step 2/3. Catalyzes the cleavage of L-kynurenine (L-Kyn) and L-3-hydroxykynurenine (L-3OHKyn) into anthranilic acid (AA) and 3-hydroxyanthranilic acid (3-OHAA), respectively. The polypeptide is Kynureninase (Xanthomonas campestris pv. campestris (strain B100)).